We begin with the raw amino-acid sequence, 434 residues long: [Pyruvate dehydrogenase (acetyl-transferring)] kinase isozyme 1, mitochondrial (434 aa).

A mitochondrion-targeting transit peptide spans methionine 1–leucine 26. Position 136 is a phosphotyrosine; by FGFR1 (tyrosine 136). The Histidine kinase domain occupies threonine 161–serine 391. Tyrosine 241 is subject to Phosphotyrosine; by FGFR1, ABL1, FLT3 and JAK2. Tyrosine 242 is subject to Phosphotyrosine; by FGFR1. ATP contacts are provided by residues glutamate 277–arginine 284, aspartate 316, serine 335–threonine 336, and glycine 352–leucine 357. The residue at position 336 (threonine 336) is a Phosphothreonine. An N6-succinyllysine modification is found at lysine 403.

It belongs to the PDK/BCKDK protein kinase family. Homodimer, and heterodimer with PDK2. Interacts with the pyruvate dehydrogenase complex subunit DLAT, and is part of the multimeric pyruvate dehydrogenase complex that contains multiple copies of pyruvate dehydrogenase (E1), dihydrolipoamide acetyltransferase (DLAT, E2) and lipoamide dehydrogenase (DLD, E3). Interacts with phosphoglycerate kinase PGK1; the interaction is direct, occurs under hypoxic conditions and leads to PDK1-mediated inhibition of pyruvate dehydrogenase complex activity. In terms of processing, phosphorylated by constitutively activated ABL1, FGFR1, FLT3 and JAK2 (in vitro), and this may also occur in cancer cells that express constitutively activated ABL1, FGFR1, FLT3 and JAK2. Phosphorylation at Tyr-241 and Tyr-242 strongly increases kinase activity, while phosphorylation at Tyr-136 has a lesser effect. Phosphorylated under hypoxic conditions at Thr-336 by phosphoglycerate kinase PGK1 which has an activating effect.

The protein localises to the mitochondrion matrix. It catalyses the reaction L-seryl-[pyruvate dehydrogenase E1 alpha subunit] + ATP = O-phospho-L-seryl-[pyruvate dehydrogenase E1 alpha subunit] + ADP + H(+). Kinase that plays a key role in regulation of glucose and fatty acid metabolism and homeostasis via phosphorylation of the pyruvate dehydrogenase subunits PDHA1 and PDHA2. This inhibits pyruvate dehydrogenase activity, and thereby regulates metabolite flux through the tricarboxylic acid cycle, down-regulates aerobic respiration and inhibits the formation of acetyl-coenzyme A from pyruvate. Plays an important role in cellular responses to hypoxia and is important for cell proliferation under hypoxia. The chain is [Pyruvate dehydrogenase (acetyl-transferring)] kinase isozyme 1, mitochondrial (Pdk1) from Mus musculus (Mouse).